We begin with the raw amino-acid sequence, 245 residues long: Chymotrypsin B (245 aa).

Intrachain disulfides connect cysteine 1-cysteine 121, cysteine 42-cysteine 58, cysteine 135-cysteine 201, cysteine 167-cysteine 182, and cysteine 191-cysteine 220. The propeptide occupies 14 to 15 (AR). A Peptidase S1 domain is found at 16 to 243 (IVNGEEAVPH…LRGWVDQILA (228 aa)). Active-site charge relay system residues include histidine 57 and aspartate 101. Serine 195 serves as the catalytic Charge relay system.

Belongs to the peptidase S1 family.

It is found in the secreted. Its subcellular location is the extracellular space. It carries out the reaction Preferential cleavage: Tyr-|-Xaa, Trp-|-Xaa, Phe-|-Xaa, Leu-|-Xaa.. This Gadus morhua (Atlantic cod) protein is Chymotrypsin B.